Here is a 438-residue protein sequence, read N- to C-terminus: Asparagine--tRNA ligase (438 aa).

Belongs to the class-II aminoacyl-tRNA synthetase family. Homodimer.

The protein localises to the cytoplasm. It catalyses the reaction tRNA(Asn) + L-asparagine + ATP = L-asparaginyl-tRNA(Asn) + AMP + diphosphate + H(+). This chain is Asparagine--tRNA ligase, found in Thermus thermophilus (strain ATCC 27634 / DSM 579 / HB8).